We begin with the raw amino-acid sequence, 76 residues long: Monocarboxylate transporter 1 (76 aa).

3 helical membrane-spanning segments follow: residues 1–18 (LSIL…MGLA), 28–48 (IQYF…LAPL), and 53–73 (IGFC…SSVL). Asp8 is a H(+) binding site. (S)-lactate is bound at residue Arg12.

The protein belongs to the major facilitator superfamily. Monocarboxylate porter (TC 2.A.1.13) family. In terms of assembly, interacts with BSG; interaction mediates SLC16A1 targeting to the plasma membrane. Interacts with EMB; interaction mediates SLC16A1 targeting to the plasma membrane.

The protein localises to the cell membrane. Its subcellular location is the basolateral cell membrane. It localises to the apical cell membrane. It catalyses the reaction (S)-lactate(in) + H(+)(in) = (S)-lactate(out) + H(+)(out). The enzyme catalyses acetate(out) + H(+)(out) = acetate(in) + H(+)(in). The catalysed reaction is acetoacetate(out) + H(+)(out) = acetoacetate(in) + H(+)(in). It carries out the reaction pyruvate(out) + H(+)(out) = pyruvate(in) + H(+)(in). It catalyses the reaction (R)-3-hydroxybutanoate(out) + H(+)(out) = (R)-3-hydroxybutanoate(in) + H(+)(in). The enzyme catalyses 3-methyl-2-oxobutanoate(out) + H(+)(out) = 3-methyl-2-oxobutanoate(in) + H(+)(in). The catalysed reaction is 4-methyl-2-oxopentanoate(out) + H(+)(out) = 4-methyl-2-oxopentanoate(in) + H(+)(in). It carries out the reaction succinate(in) + 2 H(+)(in) = succinate(out) + 2 H(+)(out). Bidirectional proton-coupled monocarboxylate transporter. Catalyzes the rapid transport across the plasma membrane of many monocarboxylates such as lactate, pyruvate, acetate and the ketone bodies acetoacetate and beta-hydroxybutyrate, and thus contributes to the maintenance of intracellular pH. The transport direction is determined by the proton motive force and the concentration gradient of the substrate monocarboxylate. MCT1 is a major lactate exporter. Plays a role in cellular responses to a high-fat diet by modulating the cellular levels of lactate and pyruvate that contribute to the regulation of central metabolic pathways and insulin secretion, with concomitant effects on plasma insulin levels and blood glucose homeostasis. Facilitates the protonated monocarboxylate form of succinate export, that its transient protonation upon muscle cell acidification in exercising muscle and ischemic heart. Functions via alternate outward- and inward-open conformation states. Protonation and deprotonation is essential for the conformational transition. The chain is Monocarboxylate transporter 1 (SLC16A1) from Meriones unguiculatus (Mongolian jird).